A 134-amino-acid chain; its full sequence is Large ribosomal subunit protein bL20 (134 aa).

This sequence belongs to the bacterial ribosomal protein bL20 family.

Its function is as follows. Binds directly to 23S ribosomal RNA and is necessary for the in vitro assembly process of the 50S ribosomal subunit. It is not involved in the protein synthesizing functions of that subunit. This is Large ribosomal subunit protein bL20 from Rhizobium meliloti (strain 1021) (Ensifer meliloti).